The following is a 475-amino-acid chain: Retrotransposon Gag-like protein 3 (475 aa).

Composition is skewed to basic and acidic residues over residues 51–66 (LLRK…KLPE) and 78–87 (KTPEFKEPQK). Disordered stretches follow at residues 51–101 (LLRK…EPPA), 152–173 (EPKN…APEY), and 397–421 (DPNP…ENQP). The CCHC-type zinc-finger motif lies at 443–462 (RLCLYCGYPGHFARDCPVKP).

The protein resides in the nucleus. Functionally, may function as a transcriptional regulator. Plays a role in postnatal myogenesis, may be involved in the regulation of satellite cells self-renewal. The polypeptide is Retrotransposon Gag-like protein 3 (Homo sapiens (Human)).